The following is a 153-amino-acid chain: Ribonuclease H (153 aa).

The RNase H type-1 domain maps to 1–142 (MLKTIKIFSD…CDHLARESAK (142 aa)). Mg(2+) contacts are provided by Asp-10, Glu-48, Asp-70, and Asp-134.

The protein belongs to the RNase H family. Monomer. It depends on Mg(2+) as a cofactor.

It is found in the cytoplasm. The enzyme catalyses Endonucleolytic cleavage to 5'-phosphomonoester.. In terms of biological role, endonuclease that specifically degrades the RNA of RNA-DNA hybrids. The polypeptide is Ribonuclease H (Buchnera aphidicola subsp. Baizongia pistaciae (strain Bp)).